A 600-amino-acid chain; its full sequence is Elongation factor 4 (600 aa).

One can recognise a tr-type G domain in the interval 5-187 (SRIRNFSIIA…DLIKKIPPPK (183 aa)). Residues 17–22 (DHGKST) and 134–137 (NKMD) contribute to the GTP site.

It belongs to the TRAFAC class translation factor GTPase superfamily. Classic translation factor GTPase family. LepA subfamily.

The protein localises to the cell inner membrane. The enzyme catalyses GTP + H2O = GDP + phosphate + H(+). In terms of biological role, required for accurate and efficient protein synthesis under certain stress conditions. May act as a fidelity factor of the translation reaction, by catalyzing a one-codon backward translocation of tRNAs on improperly translocated ribosomes. Back-translocation proceeds from a post-translocation (POST) complex to a pre-translocation (PRE) complex, thus giving elongation factor G a second chance to translocate the tRNAs correctly. Binds to ribosomes in a GTP-dependent manner. The sequence is that of Elongation factor 4 from Marinobacter nauticus (strain ATCC 700491 / DSM 11845 / VT8) (Marinobacter aquaeolei).